The primary structure comprises 501 residues: Endoglucanase 1 (501 aa).

The N-terminal stretch at 1-29 is a signal peptide; sequence MALYLSSSRLITFLSFILLLSNGFSSSSS. Residue D96 is the Nucleophile of the active site. Residues H422, D473, and E482 contribute to the active site.

It belongs to the glycosyl hydrolase 9 (cellulase E) family.

It localises to the secreted. It catalyses the reaction Endohydrolysis of (1-&gt;4)-beta-D-glucosidic linkages in cellulose, lichenin and cereal beta-D-glucans.. This chain is Endoglucanase 1 (CEL2), found in Arabidopsis thaliana (Mouse-ear cress).